The following is a 681-amino-acid chain: tRNA wybutosine-synthesizing protein 4 (681 aa).

Residues 1 to 11 (MSNKNQRKTKS) are compositionally biased toward basic residues. The disordered stretch occupies residues 1-21 (MSNKNQRKTKSKDREVRKTND). S-adenosyl-L-methionine-binding positions include R66, G92, D119, 165–166 (NL), and E193.

Belongs to the methyltransferase superfamily. LCMT family.

The catalysed reaction is 7-[(3S)-3-amino-3-carboxypropyl]wyosine(37) in tRNA(Phe) + S-adenosyl-L-methionine = 7-[(3S)-(3-amino-3-methoxycarbonyl)propyl]wyosine(37) in tRNA(Phe) + S-adenosyl-L-homocysteine. It carries out the reaction 7-[(3S)-(3-amino-3-methoxycarbonyl)propyl]wyosine(37) in tRNA(Phe) + S-adenosyl-L-methionine + CO2 = wybutosine(37) in tRNA(Phe) + S-adenosyl-L-homocysteine + 2 H(+). The protein operates within tRNA modification; wybutosine-tRNA(Phe) biosynthesis. Probable S-adenosyl-L-methionine-dependent methyltransferase that acts as a component of the wybutosine biosynthesis pathway. Wybutosine is a hyper modified guanosine with a tricyclic base found at the 3'-position adjacent to the anticodon of eukaryotic phenylalanine tRNA. May methylate the carboxyl group of leucine residues to form alpha-leucine ester residues. This chain is tRNA wybutosine-synthesizing protein 4 (ppm2), found in Schizosaccharomyces pombe (strain 972 / ATCC 24843) (Fission yeast).